The following is a 457-amino-acid chain: MEVENFTDCQVYWKVYPDPSQSIYAIVPFLTVYLFLFFLGLFGNVTLIYVTCSHKALLSVQNIFILNLAASDCMMCILSLPITPITNVYKNWYFGNLLCHLIPCIQGISIFVCTFSLGAIALDRYILVVRPHSTPLSQRGAFLTTVLLWILSFVVTLPYAFNMQMIEYTEERICGYFCTEKWESAKSRRAYTMIVMLAQFVVPFAVMAFCYANIVSVLSKRAQTKIRKMVERTSALESSCAFPSHGLEQYENELNEFLDKQEKEKQRVVLQNRRTTSILVTMVVWFGITWLPHNVISLIIEYDDTQSFFRLYGRDDYDISYLLNLFTHSIAMSNNVLNPVLYAWLNPSFRQLVIKTYFGDRRKSDRIINQTSVYKTKIVHDTKHLNGRAKIGGGGSHEALKERELNSCSENLSYHVNGHTRTPTPEVQLNEVSSPEISKLVAEPEELIEFSVNDTLV.

The Extracellular portion of the chain corresponds to 1-22 (MEVENFTDCQVYWKVYPDPSQS). Residues 23–43 (IYAIVPFLTVYLFLFFLGLFG) traverse the membrane as a helical segment. Topologically, residues 44–62 (NVTLIYVTCSHKALLSVQN) are cytoplasmic. A helical transmembrane segment spans residues 63-83 (IFILNLAASDCMMCILSLPIT). Residues 84 to 100 (PITNVYKNWYFGNLLCH) are Extracellular-facing. A disulfide bond links C99 and C178. The helical transmembrane segment at 101–121 (LIPCIQGISIFVCTFSLGAIA) threads the bilayer. At 122–140 (LDRYILVVRPHSTPLSQRG) the chain is on the cytoplasmic side. Residues 141–161 (AFLTTVLLWILSFVVTLPYAF) traverse the membrane as a helical segment. Topologically, residues 162-193 (NMQMIEYTEERICGYFCTEKWESAKSRRAYTM) are extracellular. The chain crosses the membrane as a helical span at residues 194-214 (IVMLAQFVVPFAVMAFCYANI). Topologically, residues 215–279 (VSVLSKRAQT…LQNRRTTSIL (65 aa)) are cytoplasmic. Residues 280–300 (VTMVVWFGITWLPHNVISLII) form a helical membrane-spanning segment. Topologically, residues 301–324 (EYDDTQSFFRLYGRDDYDISYLLN) are extracellular. A helical membrane pass occupies residues 325–345 (LFTHSIAMSNNVLNPVLYAWL). Residues 346–457 (NPSFRQLVIK…IEFSVNDTLV (112 aa)) are Cytoplasmic-facing.

It belongs to the G-protein coupled receptor 1 family. In terms of tissue distribution, expressed in neurons, including neurons in the head, the ventral nerve cord, and the preanal ganglion.

The protein resides in the membrane. Its function is as follows. G-protein coupled receptor for FARP(FMRFamide related peptide) neuropeptides. Activated by FARP neuropeptides flp-18 and flp-21. Plays a role in modulating social and feeding behavior. Required to modulate locomotion quiescence during the sleep-like state called lethargus, which occurs during molting between larval and adult stages, in part by regulating touch sensitivity. The polypeptide is Neuropeptide receptor npr-1 (Caenorhabditis elegans).